The sequence spans 194 residues: Probable thymidylate kinase (194 aa).

Residue Gly8–Thr15 coordinates ATP.

The protein belongs to the thymidylate kinase family.

It catalyses the reaction dTMP + ATP = dTDP + ADP. The protein is Probable thymidylate kinase of Sulfolobus acidocaldarius (strain ATCC 33909 / DSM 639 / JCM 8929 / NBRC 15157 / NCIMB 11770).